Consider the following 103-residue polypeptide: Large ribosomal subunit protein bL21 (103 aa).

The protein belongs to the bacterial ribosomal protein bL21 family. Part of the 50S ribosomal subunit. Contacts protein L20.

In terms of biological role, this protein binds to 23S rRNA in the presence of protein L20. The protein is Large ribosomal subunit protein bL21 of Alkaliphilus oremlandii (strain OhILAs) (Clostridium oremlandii (strain OhILAs)).